We begin with the raw amino-acid sequence, 37 residues long: Large ribosomal subunit protein bL36 (37 aa).

It belongs to the bacterial ribosomal protein bL36 family.

This Staphylococcus epidermidis (strain ATCC 35984 / DSM 28319 / BCRC 17069 / CCUG 31568 / BM 3577 / RP62A) protein is Large ribosomal subunit protein bL36.